Consider the following 608-residue polypeptide: Isocitrate dehydrogenase kinase/phosphatase (608 aa).

ATP is bound by residues 327–333 (APGIKGL) and Lys348. Asp383 is an active-site residue.

This sequence belongs to the AceK family.

Its subcellular location is the cytoplasm. The catalysed reaction is L-seryl-[isocitrate dehydrogenase] + ATP = O-phospho-L-seryl-[isocitrate dehydrogenase] + ADP + H(+). Bifunctional enzyme which can phosphorylate or dephosphorylate isocitrate dehydrogenase (IDH) on a specific serine residue. This is a regulatory mechanism which enables bacteria to bypass the Krebs cycle via the glyoxylate shunt in response to the source of carbon. When bacteria are grown on glucose, IDH is fully active and unphosphorylated, but when grown on acetate or ethanol, the activity of IDH declines drastically concomitant with its phosphorylation. The chain is Isocitrate dehydrogenase kinase/phosphatase from Burkholderia ambifaria (strain ATCC BAA-244 / DSM 16087 / CCUG 44356 / LMG 19182 / AMMD) (Burkholderia cepacia (strain AMMD)).